A 267-amino-acid chain; its full sequence is Putative [LysW]-aminoadipate/[LysW]-glutamate kinase (267 aa).

Substrate-binding positions include 37-38 (GG), R64, and N169.

It belongs to the acetylglutamate kinase family. LysZ subfamily.

Its subcellular location is the cytoplasm. It catalyses the reaction [amino-group carrier protein]-C-terminal-N-(1,4-dicarboxybutan-1-yl)-L-glutamine + ATP = [amino-group carrier protein]-C-terminal-N-(1-carboxy-5-phosphooxy-5-oxopentan-1-yl)-L-glutamine + ADP. It carries out the reaction [amino-group carrier protein]-C-terminal-gamma-(L-glutamyl)-L-glutamate + ATP = [amino-group carrier protein]-C-terminal-gamma-(5-phospho-L-glutamyl)-L-glutamate + ADP. Its pathway is amino-acid biosynthesis; L-lysine biosynthesis via AAA pathway; L-lysine from L-alpha-aminoadipate (Thermus route): step 2/5. It participates in amino-acid biosynthesis; L-arginine biosynthesis. Functionally, involved in both the arginine and lysine biosynthetic pathways. Phosphorylates the LysW-bound precursors glutamate (for arginine biosynthesis), respectively alpha-aminoadipate (for lysine biosynthesis). This Nitrosopumilus maritimus (strain SCM1) protein is Putative [LysW]-aminoadipate/[LysW]-glutamate kinase.